The chain runs to 239 residues: Cysteine-rich venom protein (239 aa).

Residues 1–19 (MIAFLVLPILAAVLQQSSG) form the signal peptide. The region spanning 39-166 (DLHNSLRRSV…EYKYFYVCQY (128 aa)) is the SCP domain. 8 disulfide bridges follow: Cys75-Cys153, Cys92-Cys167, Cys148-Cys164, Cys186-Cys193, Cys189-Cys198, Cys202-Cys234, Cys211-Cys228, and Cys219-Cys232. The ShKT domain occupies 202–234 (CTHEDKFTNCKDLVKQGCNNNYLKTNCPASCSC).

It belongs to the CRISP family. Expressed by the venom gland.

Its subcellular location is the secreted. In terms of biological role, blocks contraction of smooth muscle elicited by high potassium-induced depolarization, but does not block caffeine-stimulated contraction. May target voltage-gated calcium channels in smooth muscle. The protein is Cysteine-rich venom protein of Vipera berus (Common European adder).